The primary structure comprises 155 residues: Protein-export protein SecB 1 (155 aa).

It belongs to the SecB family. As to quaternary structure, homotetramer, a dimer of dimers. One homotetramer interacts with 1 SecA dimer.

It localises to the cytoplasm. Its function is as follows. One of the proteins required for the normal export of preproteins out of the cell cytoplasm. It is a molecular chaperone that binds to a subset of precursor proteins, maintaining them in a translocation-competent state. It also specifically binds to its receptor SecA. In Polaromonas naphthalenivorans (strain CJ2), this protein is Protein-export protein SecB 1.